The primary structure comprises 323 residues: tRNA-modifying protein YgfZ (323 aa).

The folate site is built by Trp-29 and Trp-182.

This sequence belongs to the tRNA-modifying YgfZ family.

The protein localises to the cytoplasm. Its function is as follows. Folate-binding protein involved in regulating the level of ATP-DnaA and in the modification of some tRNAs. It is probably a key factor in regulatory networks that act via tRNA modification, such as initiation of chromosomal replication. This is tRNA-modifying protein YgfZ from Vibrio atlanticus (strain LGP32) (Vibrio splendidus (strain Mel32)).